The following is a 146-amino-acid chain: Snaclec agkisacutacin subunit B (146 aa).

An N-terminal signal peptide occupies residues 1–23 (MGRFIFVSFGLLVVFLSLSGTAA). Positions 24-146 (DCPSDWSSYE…TCSFVCKFQA (123 aa)) constitute a C-type lectin domain. Disulfide bonds link cysteine 25–cysteine 36, cysteine 53–cysteine 142, and cysteine 119–cysteine 134. Ca(2+)-binding residues include serine 64 and glutamate 70.

The protein belongs to the snaclec family. Heterodimer of subunits A and B; disulfide-linked. In terms of tissue distribution, expressed by the venom gland.

The protein resides in the secreted. Its function is as follows. Anticoagulant protein which binds to the gamma-carboxyglutamic acid-domain regions of factor IX (F9) and factor X (F10) in the presence of calcium with a 1 to 1 stoichiometry. Also inhibits platelet aggregation by binding to platelet glycoprotein Ibalpha (GP1BA) and functioning as a blocker of von Willebrand factor (VWF). Is devoid of hemorrhagic and lethal activities. Possesses antithrombotic and thrombolytic activities. Also hydrolyzes the Aalpha-chain of fibrinogen (FGA). Does not affect the Bbeta-chain (FGB) and the gamma chain (FGG). This Deinagkistrodon acutus (Hundred-pace snake) protein is Snaclec agkisacutacin subunit B.